Consider the following 514-residue polypeptide: Putative ribose/galactose/methyl galactoside import ATP-binding protein 3 (514 aa).

2 consecutive ABC transporter domains span residues leucine 21–threonine 256 and valine 267–serine 512. Residue glycine 53–serine 60 participates in ATP binding.

This sequence belongs to the ABC transporter superfamily. Carbohydrate importer 2 (CUT2) (TC 3.A.1.2) family.

Its subcellular location is the cell inner membrane. It catalyses the reaction D-ribose(out) + ATP + H2O = D-ribose(in) + ADP + phosphate + H(+). It carries out the reaction D-galactose(out) + ATP + H2O = D-galactose(in) + ADP + phosphate + H(+). Part of an ABC transporter complex involved in carbohydrate import. Could be involved in ribose, galactose and/or methyl galactoside import. Responsible for energy coupling to the transport system. The polypeptide is Putative ribose/galactose/methyl galactoside import ATP-binding protein 3 (Burkholderia cenocepacia (strain HI2424)).